Here is a 247-residue protein sequence, read N- to C-terminus: Cell division protein ZapD (247 aa).

Belongs to the ZapD family. As to quaternary structure, interacts with FtsZ.

The protein localises to the cytoplasm. Functionally, cell division factor that enhances FtsZ-ring assembly. Directly interacts with FtsZ and promotes bundling of FtsZ protofilaments, with a reduction in FtsZ GTPase activity. In Shigella boydii serotype 4 (strain Sb227), this protein is Cell division protein ZapD.